A 147-amino-acid chain; its full sequence is Hemoglobin subunit epsilon-1 (147 aa).

The region spanning 3–147 (HFTAEEKAAI…VATALAHKYH (145 aa)) is the Globin domain. Heme b contacts are provided by H64 and H93.

It belongs to the globin family. In terms of assembly, heterotetramer of two epsilon chains and two alpha chains. Red blood cells.

Functionally, beta-type chain found in early embryos. The protein is Hemoglobin subunit epsilon-1 (HBE1) of Capra hircus (Goat).